A 307-amino-acid polypeptide reads, in one-letter code: Cytochrome c1, heme protein, mitochondrial (307 aa).

A mitochondrion-targeting transit peptide spans 1 to 56 (MFQFVKKKNEFLKFARLGSRAFTQNAQKTHSKGSNIALVSSSLLSVGMIALYYNVY). Topologically, residues 57–269 (GPSLSAGTPK…EPELDIRKKM (213 aa)) are mitochondrial intermembrane. The 171-residue stretch at 89–259 (ASLRRGFQVY…DVVNFLHWAS (171 aa)) folds into the Cytochrome c domain. Residues Cys-102, Cys-105, His-106, and Met-225 each coordinate heme c. Residues 270 to 287 (GFQVITVLTILTALSMWY) traverse the membrane as a helical segment. Residues 288-307 (KRFKWTPIKNRKIFYQRPIK) lie on the Mitochondrial matrix side of the membrane.

The protein belongs to the cytochrome c family. As to quaternary structure, component of the ubiquinol-cytochrome c oxidoreductase (cytochrome b-c1 complex, complex III, CIII), a multisubunit enzyme composed of 3 respiratory subunits cytochrome b, cytochrome c1 and Rieske protein, 2 core protein subunits, and additional low-molecular weight protein subunits. The complex exists as an obligatory dimer and forms supercomplexes (SCs) in the inner mitochondrial membrane with cytochrome c oxidase (complex IV, CIV). It depends on heme c as a cofactor.

Its subcellular location is the mitochondrion inner membrane. The catalysed reaction is a quinol + 2 Fe(III)-[cytochrome c](out) = a quinone + 2 Fe(II)-[cytochrome c](out) + 2 H(+)(out). Its function is as follows. Component of the ubiquinol-cytochrome c oxidoreductase, a multisubunit transmembrane complex that is part of the mitochondrial electron transport chain which drives oxidative phosphorylation. The respiratory chain contains 3 multisubunit complexes succinate dehydrogenase (complex II, CII), ubiquinol-cytochrome c oxidoreductase (cytochrome b-c1 complex, complex III, CIII) and cytochrome c oxidase (complex IV, CIV), that cooperate to transfer electrons derived from NADH and succinate to molecular oxygen, creating an electrochemical gradient over the inner membrane that drives transmembrane transport and the ATP synthase. The cytochrome b-c1 complex catalyzes electron transfer from ubiquinol to cytochrome c, linking this redox reaction to translocation of protons across the mitochondrial inner membrane, with protons being carried across the membrane as hydrogens on the quinol. In the process called Q cycle, 2 protons are consumed from the matrix, 4 protons are released into the intermembrane space and 2 electrons are passed to cytochrome c. Cytochrome c1 is a catalytic core subunit containing a c-type heme. It transfers electrons from the [2Fe-2S] iron-sulfur cluster of the Rieske protein to cytochrome c. This Schizosaccharomyces pombe (strain 972 / ATCC 24843) (Fission yeast) protein is Cytochrome c1, heme protein, mitochondrial (cyt1).